Reading from the N-terminus, the 261-residue chain is MSTALATLAGKLAERVGMDSVDPQELITTLRQTAFKGDASDAQFIALLIVANQYGLNPWTKEIYAFPDKQNGIVPVVGVDGWSRIINENQQFDGMDFEQDNESCTCRIYRKDRNHPICVTEWMDECRREPFKTREGREITGPWQSHPKRMLRHKAMIQCARLAFGFAGIYDKDEAERIVENTAYTAERQPERDITPVNDETMQEINTLLIALDKTWDDDLLPLCSQIFRRDIRASSELTQAEAVKALGFLKQKAAEQKVAA.

Gene bet protein functions in general recombination and in the late, rolling-circle mode of lambda DNA replication. Has a function similar to that of E.coli recT. It is a single-stranded DNA binding protein that can promote renaturation of DNA. The chain is Recombination protein bet (bet) from Escherichia coli (Bacteriophage lambda).